The following is a 318-amino-acid chain: Ferredoxin--NADP reductase (318 aa).

The FAD site is built by aspartate 33, glutamine 41, tyrosine 46, valine 84, phenylalanine 115, aspartate 276, and threonine 316.

This sequence belongs to the ferredoxin--NADP reductase type 2 family. In terms of assembly, homodimer. FAD is required as a cofactor.

It catalyses the reaction 2 reduced [2Fe-2S]-[ferredoxin] + NADP(+) + H(+) = 2 oxidized [2Fe-2S]-[ferredoxin] + NADPH. This Lactobacillus gasseri (strain ATCC 33323 / DSM 20243 / BCRC 14619 / CIP 102991 / JCM 1131 / KCTC 3163 / NCIMB 11718 / NCTC 13722 / AM63) protein is Ferredoxin--NADP reductase.